The chain runs to 492 residues: Catalase-1 (492 aa).

Catalysis depends on residues His-65 and Asn-138. Tyr-348 contacts heme.

It belongs to the catalase family. As to quaternary structure, homotetramer and heterotetramer. At least six or seven isozymes are produced from a mixture of 3 gene products. Interacts with NCA1. Interacts with LSD1. It depends on heme as a cofactor.

Its subcellular location is the cytoplasm. It catalyses the reaction 2 H2O2 = O2 + 2 H2O. Functionally, occurs in almost all aerobically respiring organisms and serves to protect cells from the toxic effects of hydrogen peroxide. The polypeptide is Catalase-1 (CAT1) (Arabidopsis thaliana (Mouse-ear cress)).